The following is a 418-amino-acid chain: Pyrophosphate--fructose 6-phosphate 1-phosphotransferase (418 aa).

Glycine 13 is a binding site for diphosphate. Asparagine 111 contributes to the Mg(2+) binding site. Residues 139–141 (TID), 187–189 (MGR), glutamate 244, and 295–298 (YLQR) contribute to the substrate site. The Proton acceptor role is filled by aspartate 141.

This sequence belongs to the phosphofructokinase type A (PFKA) family. PPi-dependent PFK group II subfamily. Clade 'B2' sub-subfamily. As to quaternary structure, homodimer. It depends on Mg(2+) as a cofactor.

The protein resides in the cytoplasm. It catalyses the reaction beta-D-fructose 6-phosphate + diphosphate = beta-D-fructose 1,6-bisphosphate + phosphate + H(+). It participates in carbohydrate degradation; glycolysis; D-glyceraldehyde 3-phosphate and glycerone phosphate from D-glucose: step 3/4. Non-allosteric. Functionally, catalyzes the phosphorylation of D-fructose 6-phosphate, the first committing step of glycolysis. Uses inorganic phosphate (PPi) as phosphoryl donor instead of ATP like common ATP-dependent phosphofructokinases (ATP-PFKs), which renders the reaction reversible, and can thus function both in glycolysis and gluconeogenesis. Consistently, PPi-PFK can replace the enzymes of both the forward (ATP-PFK) and reverse (fructose-bisphosphatase (FBPase)) reactions. This chain is Pyrophosphate--fructose 6-phosphate 1-phosphotransferase, found in Xanthomonas campestris pv. campestris (strain B100).